Consider the following 425-residue polypeptide: Dihydroorotase (425 aa).

2 residues coordinate Zn(2+): His-56 and His-58. Residues 58-60 (HYR) and Asn-90 contribute to the substrate site. Asp-148, His-175, and His-228 together coordinate Zn(2+). Asn-274 is a substrate binding site. Zn(2+) is bound at residue Asp-301. Residue Asp-301 is part of the active site. Residues His-305 and 319–320 (FG) each bind substrate.

This sequence belongs to the metallo-dependent hydrolases superfamily. DHOase family. Class I DHOase subfamily. The cofactor is Zn(2+).

The catalysed reaction is (S)-dihydroorotate + H2O = N-carbamoyl-L-aspartate + H(+). It functions in the pathway pyrimidine metabolism; UMP biosynthesis via de novo pathway; (S)-dihydroorotate from bicarbonate: step 3/3. Its function is as follows. Catalyzes the reversible cyclization of carbamoyl aspartate to dihydroorotate. The sequence is that of Dihydroorotase from Lactobacillus helveticus (strain DPC 4571).